The primary structure comprises 182 residues: NAD(P)H-quinone oxidoreductase subunit I, chloroplastic (182 aa).

2 4Fe-4S ferredoxin-type domains span residues 52–81 (GRIHFEFDKCIACEVCVRVCPINLPVVDWE) and 92–121 (KSYSIDFGVCIFCGNCVEYCPTNCLSMTEE). [4Fe-4S] cluster-binding residues include Cys-61, Cys-64, Cys-67, Cys-71, Cys-101, Cys-104, Cys-107, and Cys-111.

Belongs to the complex I 23 kDa subunit family. NDH is composed of at least 16 different subunits, 5 of which are encoded in the nucleus. It depends on [4Fe-4S] cluster as a cofactor.

Its subcellular location is the plastid. The protein localises to the chloroplast thylakoid membrane. It catalyses the reaction a plastoquinone + NADH + (n+1) H(+)(in) = a plastoquinol + NAD(+) + n H(+)(out). The enzyme catalyses a plastoquinone + NADPH + (n+1) H(+)(in) = a plastoquinol + NADP(+) + n H(+)(out). In terms of biological role, NDH shuttles electrons from NAD(P)H:plastoquinone, via FMN and iron-sulfur (Fe-S) centers, to quinones in the photosynthetic chain and possibly in a chloroplast respiratory chain. The immediate electron acceptor for the enzyme in this species is believed to be plastoquinone. Couples the redox reaction to proton translocation, and thus conserves the redox energy in a proton gradient. The chain is NAD(P)H-quinone oxidoreductase subunit I, chloroplastic from Chaetosphaeridium globosum (Charophycean green alga).